A 27-amino-acid chain; its full sequence is Trypsin inhibitor 1 (27 aa).

As to quaternary structure, homodimer. Contains disulfide bonds. Post-translationally, glycosylated.

Its function is as follows. Inhibits trypsin (IC(50)=1.25 uM) but not chymotrypsin or papain. Has antibacterial activity against S.enterica ATCC 10708 (MIC=5 ug/ml) and S.aureus ATCC 25923 (MIC=5 ug/ml) but not against B.subtilis ATCC 6633 or P.aeruginosa ATCC 25619. Has no hemolytic activity against human erythrocytes. Is not toxic to mice. The sequence is that of Trypsin inhibitor 1 from Jatropha curcas (Barbados nut).